A 245-amino-acid polypeptide reads, in one-letter code: Type II restriction enzyme EcoRV (245 aa).

Glutamate 45, aspartate 74, and aspartate 90 together coordinate Mg(2+). Catalysis depends on residues aspartate 74, aspartate 90, and lysine 92.

Homodimer. Mg(2+) is required as a cofactor.

It carries out the reaction Endonucleolytic cleavage of DNA to give specific double-stranded fragments with terminal 5'-phosphates.. Its function is as follows. A P subtype restriction enzyme that recognizes the double-stranded sequence 5'-GATATC-3' and cleaves after T-3. The polypeptide is Type II restriction enzyme EcoRV (ecoRVR) (Escherichia coli).